Here is a 198-residue protein sequence, read N- to C-terminus: Guanylate kinase (198 aa).

The region spanning 6–192 (KSIVIFTGPS…AAQEIREILH (187 aa)) is the Guanylate kinase-like domain. An ATP-binding site is contributed by 13 to 20 (GPSGVGKG).

This sequence belongs to the guanylate kinase family.

The protein localises to the cytoplasm. It carries out the reaction GMP + ATP = GDP + ADP. Essential for recycling GMP and indirectly, cGMP. The sequence is that of Guanylate kinase from Mycoplasmopsis synoviae (strain 53) (Mycoplasma synoviae).